A 458-amino-acid polypeptide reads, in one-letter code: Argininosuccinate lyase (458 aa).

Belongs to the lyase 1 family. Argininosuccinate lyase subfamily.

Its subcellular location is the cytoplasm. The catalysed reaction is 2-(N(omega)-L-arginino)succinate = fumarate + L-arginine. Its pathway is amino-acid biosynthesis; L-arginine biosynthesis; L-arginine from L-ornithine and carbamoyl phosphate: step 3/3. This Salmonella paratyphi B (strain ATCC BAA-1250 / SPB7) protein is Argininosuccinate lyase.